Here is a 139-residue protein sequence, read N- to C-terminus: Large ribosomal subunit protein uL16 (139 aa).

A compositionally biased stretch (basic residues) spans 1-21 (MLSPRKTKFRKQHRGRMRGKA). Residues 1–23 (MLSPRKTKFRKQHRGRMRGKATR) form a disordered region.

It belongs to the universal ribosomal protein uL16 family. In terms of assembly, part of the 50S ribosomal subunit.

Functionally, binds 23S rRNA and is also seen to make contacts with the A and possibly P site tRNAs. This Acaryochloris marina (strain MBIC 11017) protein is Large ribosomal subunit protein uL16.